The chain runs to 162 residues: RNA pyrophosphohydrolase (162 aa).

Positions 11–155 (PYRPCVGIVL…KRAVYEEVVA (145 aa)) constitute a Nudix hydrolase domain. Residues 45–66 (GGIDEGEKPREAALRELWEETG) carry the Nudix box motif.

The protein belongs to the Nudix hydrolase family. RppH subfamily. Requires a divalent metal cation as cofactor.

Functionally, accelerates the degradation of transcripts by removing pyrophosphate from the 5'-end of triphosphorylated RNA, leading to a more labile monophosphorylated state that can stimulate subsequent ribonuclease cleavage. The chain is RNA pyrophosphohydrolase from Cereibacter sphaeroides (strain ATCC 17029 / ATH 2.4.9) (Rhodobacter sphaeroides).